Reading from the N-terminus, the 509-residue chain is Probable aspartic-type endopeptidase CTSD (509 aa).

Positions 1-21 (MQFLWLCLLSAVTLQFTGTLA) are cleaved as a signal peptide. Positions 102 to 408 (YFSEVKVGSE…DFDKNRVGLA (307 aa)) constitute a Peptidase A1 domain. Residue aspartate 120 is part of the active site. N-linked (GlcNAc...) asparagine glycosylation occurs at asparagine 174. Aspartate 302 is an active-site residue. An N-linked (GlcNAc...) asparagine glycan is attached at asparagine 361. Residues 451 to 489 (NKAPSGGSPGLPAESGSDSTTNGEATNGATSSPNSSSSV) form a disordered region. The segment covering 466-480 (GSDSTTNGEATNGAT) has biased composition (polar residues). Residue asparagine 484 is glycosylated (N-linked (GlcNAc...) asparagine). Serine 485 carries the GPI-anchor amidated serine lipid modification. Positions 486–509 (SSSVLTPTWLTLAVFFAIGSSLWS) are cleaved as a propeptide — removed in mature form.

Belongs to the peptidase A1 family.

It is found in the cell membrane. Its function is as follows. Probable GPI-anchored aspartic-type endopeptidase which contributes to virulence. In Arthroderma benhamiae (strain ATCC MYA-4681 / CBS 112371) (Trichophyton mentagrophytes), this protein is Probable aspartic-type endopeptidase CTSD (CTSD).